We begin with the raw amino-acid sequence, 183 residues long: MKSVSVSRRYATALMLIGKEDGNTDQYRKELDDIVQFFDANPELEQTISNPLYDKNDRKNVLIAVLDKGGLSKVMKSFLILLFAKARISFIREVCEFYYSLADELKGVVHATLVSATELSSDAVEKIRAGLATRIGKDIVLDVEQDPSLLGGVVTKIGDLVLDGSVKTQLFNMRETLKRGESA.

The protein belongs to the ATPase delta chain family. As to quaternary structure, F-type ATPases have 2 components, F(1) - the catalytic core - and F(0) - the membrane proton channel. F(1) has five subunits: alpha(3), beta(3), gamma(1), delta(1), epsilon(1). F(0) has three main subunits: a(1), b(2) and c(10-14). The alpha and beta chains form an alternating ring which encloses part of the gamma chain. F(1) is attached to F(0) by a central stalk formed by the gamma and epsilon chains, while a peripheral stalk is formed by the delta and b chains.

It is found in the cell inner membrane. In terms of biological role, f(1)F(0) ATP synthase produces ATP from ADP in the presence of a proton or sodium gradient. F-type ATPases consist of two structural domains, F(1) containing the extramembraneous catalytic core and F(0) containing the membrane proton channel, linked together by a central stalk and a peripheral stalk. During catalysis, ATP synthesis in the catalytic domain of F(1) is coupled via a rotary mechanism of the central stalk subunits to proton translocation. This protein is part of the stalk that links CF(0) to CF(1). It either transmits conformational changes from CF(0) to CF(1) or is implicated in proton conduction. This is ATP synthase subunit delta from Desulforapulum autotrophicum (strain ATCC 43914 / DSM 3382 / VKM B-1955 / HRM2) (Desulfobacterium autotrophicum).